The following is a 2280-amino-acid chain: Protein Ycf2 (2280 aa).

An ATP-binding site is contributed by 1631–1638; it reads GSIGTGRS.

The protein belongs to the Ycf2 family.

The protein localises to the plastid. Its subcellular location is the chloroplast stroma. Probable ATPase of unknown function. Its presence in a non-photosynthetic plant (Epifagus virginiana) and experiments in tobacco indicate that it has an essential function which is probably not related to photosynthesis. The chain is Protein Ycf2 (ycf2-A) from Nicotiana tabacum (Common tobacco).